The sequence spans 153 residues: Histone H2B type W-T (153 aa).

The tract at residues 1–54 is disordered; the sequence is MATASAMAGPSSETTSEEQLITQEPKEANSTTSQKQSKQRKRGRHGPRRCHSNC. The span at 11–36 shows a compositional bias: polar residues; sequence SSETTSEEQLITQEPKEANSTTSQKQ. Over residues 37-52 the composition is skewed to basic residues; that stretch reads SKQRKRGRHGPRRCHS.

Belongs to the histone H2B family. Can replace the conventional histone H2B in the nucleosome. The nucleosome is a histone octamer containing two molecules each of H2A, H2B, H3 and H4 assembled in one H3-H4 heterotetramer and two H2A-H2B heterodimers. The octamer wraps approximately 147 bp of DNA. In terms of tissue distribution, testis-specific (at protein level).

The protein resides in the nucleus membrane. The protein localises to the chromosome. It is found in the telomere. Its function is as follows. Atypical histone H2B that can form nucleosomes structurally and dynamically indistinguishable from those containing conventional H2B. Nucleosomes wrap and compact DNA into chromatin, limiting DNA accessibility to the cellular machineries which require DNA as a template. Histones thereby play a central role in transcription regulation, DNA repair, DNA replication and chromosomal stability. DNA accessibility is regulated via a complex set of post-translational modifications of histones, also called histone code, and nucleosome remodeling. However, unlike conventional H2B, does not recruit chromosome condensation factors and does not participate in the assembly of mitotic chromosomes. May be important for telomere function and play a role in spermatogenesis. In Homo sapiens (Human), this protein is Histone H2B type W-T.